Reading from the N-terminus, the 353-residue chain is Melanin-concentrating hormone receptor 1 (353 aa).

Positions 1 to 31 (MDLEASLLPTGPNTSNTSDGPDNLTSAGSPP) are disordered. At 1–45 (MDLEASLLPTGPNTSNTSDGPDNLTSAGSPPRSGSVSYINIIMPS) the chain is on the extracellular side. Residues 11-31 (GPNTSNTSDGPDNLTSAGSPP) are compositionally biased toward polar residues. Asn-13, Asn-16, and Asn-23 each carry an N-linked (GlcNAc...) asparagine glycan. A helical transmembrane segment spans residues 46–66 (VFGTICLLGIIGNSMVIFAVV). Residues 67–79 (KKSKLHWCNNVPD) lie on the Cytoplasmic side of the membrane. The chain crosses the membrane as a helical span at residues 80-100 (IFIINLSVVDLLFLLGMPFMI). Over 101-118 (HQLMGNGVWHFGETMCTL) the chain is Extracellular. An intrachain disulfide couples Cys-116 to Cys-194. A helical transmembrane segment spans residues 119 to 139 (ITAMDANSQFTSTYILTAMAI). Over 140-161 (DRYLATVHPISSTKFRKPSVAT) the chain is Cytoplasmic. A helical transmembrane segment spans residues 162–182 (LVICLLWALSFISITPVWLYA). Topologically, residues 183–204 (RLIPFPGGAVGCGIRLPNPDTD) are extracellular. A helical transmembrane segment spans residues 205 to 225 (LYWFTLYQFFLAFALPFVVIT). The Cytoplasmic segment spans residues 226–257 (AAYVRILQRMTSSVAPASQRSIRLRTKRVTRT). Residues 258-278 (AIAICLVFFVCWAPYYVLQLT) traverse the membrane as a helical segment. Residues 279-294 (QLSISRPTLTFVYLYN) are Extracellular-facing. Residues 295–315 (AAISLGYANSCLNPFVYIVLC) traverse the membrane as a helical segment. Residues 316–353 (ETFRKRLVLSVKPAAQGQLRAVSNAQTADEERTESKGT) lie on the Cytoplasmic side of the membrane.

Belongs to the G-protein coupled receptor 1 family. Interacts with NCDN.

Its subcellular location is the cell membrane. Receptor for melanin-concentrating hormone, coupled to both G proteins that inhibit adenylyl cyclase and G proteins that activate phosphoinositide hydrolysis. This chain is Melanin-concentrating hormone receptor 1, found in Macaca mulatta (Rhesus macaque).